The primary structure comprises 579 residues: Salivary alpha-glucosidase (579 aa).

Positions 1–18 are cleaved as a signal peptide; that stretch reads MKIFVPLLSFLLAGLTTG. Ca(2+) contacts are provided by D37, D39, D41, I43, D45, and N118. N-linked (GlcNAc...) asparagine glycans are attached at residues N118 and N151. D189 contributes to the Ca(2+) binding site. D219 functions as the Nucleophile in the catalytic mechanism. Ca(2+)-binding residues include Y223, L224, and E226. N-linked (GlcNAc...) asparagine glycosylation occurs at N282. Residue E290 is the Proton donor of the active site. N-linked (GlcNAc...) asparagine glycans are attached at residues N304, N325, and N401. Residue N325 participates in N-acetyl-beta-D-glucosamine binding.

Belongs to the glycosyl hydrolase 13 family. As to expression, saliva (at protein level). Proximal lateral lobes of the salivary gland (at protein level).

The protein localises to the secreted. It carries out the reaction Hydrolysis of terminal, non-reducing (1-&gt;4)-linked alpha-D-glucose residues with release of alpha-D-glucose.. Its function is as follows. Functions as a glucosidase that shows high activity toward sucrose, a major component of nectar. Assists the mosquito in its sugar-feeding capabilities. The chain is Salivary alpha-glucosidase from Aedes aegypti (Yellowfever mosquito).